We begin with the raw amino-acid sequence, 413 residues long: Tryptophan synthase beta chain (413 aa).

Lys106 bears the N6-(pyridoxal phosphate)lysine mark.

Belongs to the TrpB family. As to quaternary structure, tetramer of two alpha and two beta chains. It depends on pyridoxal 5'-phosphate as a cofactor.

It carries out the reaction (1S,2R)-1-C-(indol-3-yl)glycerol 3-phosphate + L-serine = D-glyceraldehyde 3-phosphate + L-tryptophan + H2O. It functions in the pathway amino-acid biosynthesis; L-tryptophan biosynthesis; L-tryptophan from chorismate: step 5/5. Functionally, the beta subunit is responsible for the synthesis of L-tryptophan from indole and L-serine. This is Tryptophan synthase beta chain from Methylobacterium radiotolerans (strain ATCC 27329 / DSM 1819 / JCM 2831 / NBRC 15690 / NCIMB 10815 / 0-1).